A 279-amino-acid chain; its full sequence is Large ribosomal subunit protein uL2 (279 aa).

Disordered regions lie at residues 29–49 and 202–279; these read PVKQ…NGRV and NASI…KKKG. Positions 36-49 are enriched in low complexity; that stretch reads GKSSSGGRNNNGRV. Residues 209–220 are compositionally biased toward basic residues; sequence GRSRWLGRRPHN.

It belongs to the universal ribosomal protein uL2 family. Part of the 50S ribosomal subunit. Forms a bridge to the 30S subunit in the 70S ribosome.

In terms of biological role, one of the primary rRNA binding proteins. Required for association of the 30S and 50S subunits to form the 70S ribosome, for tRNA binding and peptide bond formation. It has been suggested to have peptidyltransferase activity; this is somewhat controversial. Makes several contacts with the 16S rRNA in the 70S ribosome. This Beijerinckia indica subsp. indica (strain ATCC 9039 / DSM 1715 / NCIMB 8712) protein is Large ribosomal subunit protein uL2.